A 399-amino-acid polypeptide reads, in one-letter code: Nicotinate phosphoribosyltransferase (399 aa).

Position 217 is a phosphohistidine; by autocatalysis (histidine 217).

The protein belongs to the NAPRTase family. Post-translationally, transiently phosphorylated on a His residue during the reaction cycle. Phosphorylation strongly increases the affinity for substrates and increases the rate of nicotinate D-ribonucleotide production. Dephosphorylation regenerates the low-affinity form of the enzyme, leading to product release.

The enzyme catalyses nicotinate + 5-phospho-alpha-D-ribose 1-diphosphate + ATP + H2O = nicotinate beta-D-ribonucleotide + ADP + phosphate + diphosphate. It participates in cofactor biosynthesis; NAD(+) biosynthesis; nicotinate D-ribonucleotide from nicotinate: step 1/1. Catalyzes the synthesis of beta-nicotinate D-ribonucleotide from nicotinate and 5-phospho-D-ribose 1-phosphate at the expense of ATP. This Burkholderia mallei (strain ATCC 23344) protein is Nicotinate phosphoribosyltransferase.